We begin with the raw amino-acid sequence, 408 residues long: MARNIVVSGIRRPPTEDLPVELVERKGLGHPDYIADSISEYVSRELSKYYMENFGTILHHNVDKVLVIGGNAQVKFGGGEIIEPIRIIVSGRATTEVKSSTGVVKVPIGSIILSAARKFIIDNFRFLNPDQHLVIDYKVGQGSVDLVGVYELGVSSGGVPLANDTSIGVGFAPLTVTERLVYETERLLNSREFKARYPEVGEDVKVMGLRRGRKITLTVASALVSRLIKDKDHYISVKEDVVNAIYDNAVKLANGYEVEVHLNTADNPEHGIYYLTYTGTSAEHGDDGMTGRGNRANGLITPMRPMSMEATAGKNPVSHIGKIYYVLANMIAKRIHDEVKGTREVYVYLLSQIGKPIDNPLIANVEIITNEGEVTSEMKREAEAITDEEISRVTRLTSMFVKGEITPF.

140–145 (GQGSVD) contacts ATP.

This sequence belongs to the AdoMet synthase 2 family. Requires Mg(2+) as cofactor.

The enzyme catalyses L-methionine + ATP + H2O = S-adenosyl-L-methionine + phosphate + diphosphate. The protein operates within amino-acid biosynthesis; S-adenosyl-L-methionine biosynthesis; S-adenosyl-L-methionine from L-methionine: step 1/1. Catalyzes the formation of S-adenosylmethionine from methionine and ATP. In Caldivirga maquilingensis (strain ATCC 700844 / DSM 13496 / JCM 10307 / IC-167), this protein is S-adenosylmethionine synthase.